A 137-amino-acid chain; its full sequence is Ribosomal RNA small subunit methyltransferase G (137 aa).

S-adenosyl-L-methionine contacts are provided by residues G75, F80, and A126–E127.

This sequence belongs to the methyltransferase superfamily. RNA methyltransferase RsmG family.

It is found in the cytoplasm. Functionally, specifically methylates the N7 position of a guanine in 16S rRNA. The polypeptide is Ribosomal RNA small subunit methyltransferase G (Mycoplasma mycoides subsp. mycoides SC (strain CCUG 32753 / NCTC 10114 / PG1)).